A 262-amino-acid polypeptide reads, in one-letter code: Lysine 5,6-aminomutase beta subunit (262 aa).

A B12-binding domain is found at 120–262 (KIVVVGASTG…VKTLNDRMNS (143 aa)). Residues 130–136 (TDAHTVG) and His133 contribute to the adenosylcob(III)alamin site. The residue at position 144 (Lys144) is an N6-(pyridoxal phosphate)lysine. Residues 185 to 192 (LVSQTVTQ), 219 to 223 (LCGGP), and 239 to 244 (FGPGRF) contribute to the adenosylcob(III)alamin site.

This sequence belongs to the KamE family. As to quaternary structure, heterotetramer of 2 alpha and 2 beta subunits. Adenosylcob(III)alamin is required as a cofactor. Requires pyridoxal 5'-phosphate as cofactor.

It carries out the reaction (3S)-3,6-diaminohexanoate = (3S,5S)-3,5-diaminohexanoate. It catalyses the reaction D-lysine = (2R,5S)-2,5-diaminohexanoate. It functions in the pathway amino-acid metabolism; lysine degradation. Rapidly inactivated in the presence of D-lysine and to a lesser extent in the absence of adenosylcobalamin (Adocbl). Activity is stable in the presence of Adocbl when D-lysine is absent. Adocbl imparts thermal stability at 37 degrees Celsius. Catalyzes the migration of the L-beta-lysine and D-lysine epsilon amino group to the delta carbon to produce 3,5-diaminohexanoate and 2,5-diaminohexanoate, respectively. The polypeptide is Lysine 5,6-aminomutase beta subunit (kamE) (Acetoanaerobium sticklandii (strain ATCC 12662 / DSM 519 / JCM 1433 / CCUG 9281 / NCIMB 10654 / HF) (Clostridium sticklandii)).